The primary structure comprises 207 residues: Outer-membrane lipoprotein LolB (207 aa).

Positions 1–21 (MTLPDFRLIRLLPLASLVLTA) are cleaved as a signal peptide. Cys-22 is lipidated: N-palmitoyl cysteine. Residue Cys-22 is the site of S-diacylglycerol cysteine attachment.

It belongs to the LolB family. In terms of assembly, monomer.

It is found in the cell outer membrane. Its function is as follows. Plays a critical role in the incorporation of lipoproteins in the outer membrane after they are released by the LolA protein. This chain is Outer-membrane lipoprotein LolB, found in Salmonella schwarzengrund (strain CVM19633).